The chain runs to 199 residues: Chaperone protein TorD (199 aa).

Belongs to the TorD/DmsD family. TorD subfamily.

The protein localises to the cytoplasm. Involved in the biogenesis of TorA. Acts on TorA before the insertion of the molybdenum cofactor and, as a result, probably favors a conformation of the apoenzyme that is competent for acquiring the cofactor. This is Chaperone protein TorD from Escherichia coli O139:H28 (strain E24377A / ETEC).